The sequence spans 226 residues: Cytidylate kinase (226 aa).

G10–T18 serves as a coordination point for ATP.

This sequence belongs to the cytidylate kinase family. Type 1 subfamily.

It is found in the cytoplasm. The catalysed reaction is CMP + ATP = CDP + ADP. It catalyses the reaction dCMP + ATP = dCDP + ADP. The sequence is that of Cytidylate kinase from Streptococcus equi subsp. equi (strain 4047).